A 320-amino-acid polypeptide reads, in one-letter code: Acetyl-coenzyme A carboxylase carboxyl transferase subunit beta (320 aa).

A CoA carboxyltransferase N-terminal domain is found at 25 to 294; that stretch reads LWRKCPECGT…AIVGDLPAPD (270 aa). Zn(2+) is bound by residues Cys29, Cys32, Cys48, and Cys51. A C4-type zinc finger spans residues 29 to 51; the sequence is CPECGTMLFHRELSDNLFVCISC. A disordered region spans residues 290–320; that stretch reads LPAPDPAPATPEPQKAAPSAPAQDKPGAGRS.

This sequence belongs to the AccD/PCCB family. As to quaternary structure, acetyl-CoA carboxylase is a heterohexamer composed of biotin carboxyl carrier protein (AccB), biotin carboxylase (AccC) and two subunits each of ACCase subunit alpha (AccA) and ACCase subunit beta (AccD). Requires Zn(2+) as cofactor.

Its subcellular location is the cytoplasm. The catalysed reaction is N(6)-carboxybiotinyl-L-lysyl-[protein] + acetyl-CoA = N(6)-biotinyl-L-lysyl-[protein] + malonyl-CoA. It functions in the pathway lipid metabolism; malonyl-CoA biosynthesis; malonyl-CoA from acetyl-CoA: step 1/1. Component of the acetyl coenzyme A carboxylase (ACC) complex. Biotin carboxylase (BC) catalyzes the carboxylation of biotin on its carrier protein (BCCP) and then the CO(2) group is transferred by the transcarboxylase to acetyl-CoA to form malonyl-CoA. This is Acetyl-coenzyme A carboxylase carboxyl transferase subunit beta from Dinoroseobacter shibae (strain DSM 16493 / NCIMB 14021 / DFL 12).